The chain runs to 599 residues: Aspartate--tRNA(Asp/Asn) ligase (599 aa).

E172 serves as a coordination point for L-aspartate. The segment at 196–199 is aspartate; the sequence is QLFK. R218 provides a ligand contact to L-aspartate. ATP is bound by residues 218 to 220 and Q227; that span reads RDE. Position 451 (H451) interacts with L-aspartate. E485 lines the ATP pocket. R492 provides a ligand contact to L-aspartate. 537–540 contributes to the ATP binding site; the sequence is GLDR.

This sequence belongs to the class-II aminoacyl-tRNA synthetase family. Type 1 subfamily. In terms of assembly, homodimer.

It is found in the cytoplasm. The enzyme catalyses tRNA(Asx) + L-aspartate + ATP = L-aspartyl-tRNA(Asx) + AMP + diphosphate. In terms of biological role, aspartyl-tRNA synthetase with relaxed tRNA specificity since it is able to aspartylate not only its cognate tRNA(Asp) but also tRNA(Asn). Reaction proceeds in two steps: L-aspartate is first activated by ATP to form Asp-AMP and then transferred to the acceptor end of tRNA(Asp/Asn). The protein is Aspartate--tRNA(Asp/Asn) ligase of Aromatoleum aromaticum (strain DSM 19018 / LMG 30748 / EbN1) (Azoarcus sp. (strain EbN1)).